A 156-amino-acid polypeptide reads, in one-letter code: Arginine repressor (156 aa).

The protein belongs to the ArgR family.

The protein resides in the cytoplasm. Its pathway is amino-acid biosynthesis; L-arginine biosynthesis [regulation]. Its function is as follows. Regulates arginine biosynthesis genes. The chain is Arginine repressor from Photorhabdus laumondii subsp. laumondii (strain DSM 15139 / CIP 105565 / TT01) (Photorhabdus luminescens subsp. laumondii).